The primary structure comprises 1124 residues: tRNA (34-2'-O)-methyltransferase regulator WDR6 (1124 aa).

M1 bears the N-acetylmethionine mark. WD repeat units follow at residues 53–97 (MKRV…IVKI), 105–143 (RELW…LYDP), 147–189 (CSLQ…VWYP), 200–238 (VPDR…IWKV), 247–285 (RVQN…VWSH), 289–327 (ILQA…LWHL), 335–376 (SGVF…LYDL), 381–422 (WEQL…VVPI), 425–470 (PTAA…ISAA), 476–520 (IFVK…LYPS), 557–596 (PMST…FVRG), 602–640 (VLRQ…VWSP), 643–682 (HEKL…LYRA), 743–789 (LIDI…VWGV), 852–897 (RHRH…LFLL), 905–950 (QLLA…FWDL), 974–1015 (GSPC…VFVL), 1039–1076 (EEYS…FWRL), and 1082–1124 (TFMN…NWYD).

It belongs to the WD repeat WDR6 family. As to quaternary structure, interacts with FTSJ1; the interaction is direct, and required for 2'-O-methylation of position 34 in substrate tRNAs. Interacts with IRS4. Interacts with STK11/LKB1.

Its subcellular location is the cytoplasm. Functionally, together with methyltransferase FTSJ1, methylates the 2'-O-ribose of nucleotides at position 34 of the tRNA anticodon loop of substrate tRNAs. Required for the correct positioning of the substrate tRNA for methylation. Required to suppress amino acid starvation-induced autophagy. Enhances the STK11/LKB1-induced cell growth suppression activity. The sequence is that of tRNA (34-2'-O)-methyltransferase regulator WDR6 (WDR6) from Bos taurus (Bovine).